We begin with the raw amino-acid sequence, 154 residues long: 6,7-dimethyl-8-ribityllumazine synthase (154 aa).

5-amino-6-(D-ribitylamino)uracil-binding positions include F23, 57 to 59 (AYE), and 81 to 83 (AVI). (2S)-2-hydroxy-3-oxobutyl phosphate is bound at residue 86–87 (AT). H89 acts as the Proton donor in catalysis. F114 provides a ligand contact to 5-amino-6-(D-ribitylamino)uracil. R128 contributes to the (2S)-2-hydroxy-3-oxobutyl phosphate binding site.

Belongs to the DMRL synthase family.

It carries out the reaction (2S)-2-hydroxy-3-oxobutyl phosphate + 5-amino-6-(D-ribitylamino)uracil = 6,7-dimethyl-8-(1-D-ribityl)lumazine + phosphate + 2 H2O + H(+). It participates in cofactor biosynthesis; riboflavin biosynthesis; riboflavin from 2-hydroxy-3-oxobutyl phosphate and 5-amino-6-(D-ribitylamino)uracil: step 1/2. In terms of biological role, catalyzes the formation of 6,7-dimethyl-8-ribityllumazine by condensation of 5-amino-6-(D-ribitylamino)uracil with 3,4-dihydroxy-2-butanone 4-phosphate. This is the penultimate step in the biosynthesis of riboflavin. The chain is 6,7-dimethyl-8-ribityllumazine synthase from Desulforamulus reducens (strain ATCC BAA-1160 / DSM 100696 / MI-1) (Desulfotomaculum reducens).